The chain runs to 1069 residues: Calcium-transporting ATPase 10, plasma membrane-type (1069 aa).

The interval 1 to 29 (MSGQFNNSPRGEDKDVEAGTSSFTEYEDS) is disordered. Ser-2 carries the post-translational modification N-acetylserine. Topologically, residues 2-180 (SGQFNNSPRG…NTYPQKKGRS (179 aa)) are cytoplasmic. Residues 42–53 (ERLRRWRQAALV) form an interaction with calmodulin region. The helical transmembrane segment at 181–201 (FWRFVWEASQDLTLIILIVAA) threads the bilayer. Topologically, residues 202–219 (VASLALGIKTEGIEKGWY) are lumenal. Residues 220–240 (DGISIAFAVLLVIVVTATSDY) traverse the membrane as a helical segment. Topologically, residues 241 to 369 (RQSLQFQNLN…GGETPLQVRL (129 aa)) are cytoplasmic. A helical transmembrane segment spans residues 370 to 389 (NGVATFIGIVGLTVAGVVLF). The Lumenal segment spans residues 390-426 (VLVVRYFTGHTKNEQGGPQFIGGKTKFEHVLDDLVEI). A helical transmembrane segment spans residues 427 to 444 (FTVAVTIVVVAVPEGLPL). The Cytoplasmic segment spans residues 445-844 (AVTLTLAYSM…RWGRSVYANI (400 aa)). Asp-482 functions as the 4-aspartylphosphate intermediate in the catalytic mechanism. Positions 789 and 793 each coordinate Mg(2+). The chain crosses the membrane as a helical span at residues 845–863 (QKFIQFQLTVNVAALVINV). The Lumenal portion of the chain corresponds to 864 to 874 (VAAISAGEVPL). A helical transmembrane segment spans residues 875 to 895 (TAVQLLWVNLIMDTLGALALA). Topologically, residues 896 to 915 (TEPPTDHLMDRAPVGRREPL) are cytoplasmic. The helical transmembrane segment at 916-938 (ITNIMWRNLFIQAMYQVTVLLIL) threads the bilayer. Residues 939–951 (NFRGISILHLKSK) lie on the Lumenal side of the membrane. Residues 952 to 973 (PNAERVKNTVIFNAFVICQVFN) form a helical membrane-spanning segment. At 974 to 991 (EFNARKPDEINIFRGVLR) the chain is on the cytoplasmic side. Residues 992 to 1013 (NHLFVGIISITIVLQVVIVEFL) form a helical membrane-spanning segment. The Lumenal portion of the chain corresponds to 1014 to 1023 (GTFASTTKLD). The helical transmembrane segment at 1024-1045 (WEMWLVCIGIGSISWPLAVIGK) threads the bilayer. At 1046 to 1069 (LIPVPETPVSQYFRINRWRRNSSG) the chain is on the cytoplasmic side.

This sequence belongs to the cation transport ATPase (P-type) (TC 3.A.3) family. Type IIB subfamily.

The protein resides in the membrane. The catalysed reaction is Ca(2+)(in) + ATP + H2O = Ca(2+)(out) + ADP + phosphate + H(+). With respect to regulation, activated by calmodulin. Functionally, this magnesium-dependent enzyme catalyzes the hydrolysis of ATP coupled with the translocation of calcium from the cytosol into the endoplasmic reticulum. The sequence is that of Calcium-transporting ATPase 10, plasma membrane-type (ACA10) from Arabidopsis thaliana (Mouse-ear cress).